We begin with the raw amino-acid sequence, 362 residues long: GDSL esterase/lipase 6 (362 aa).

A signal peptide spans 1-23 (MSSSSSMDLLMCLLLLISPVVLA). S38 acts as the Nucleophile in catalysis. N50, N103, N107, N195, and N296 each carry an N-linked (GlcNAc...) asparagine glycan. Active-site residues include D323 and H326.

The protein belongs to the 'GDSL' lipolytic enzyme family.

The protein resides in the secreted. The sequence is that of GDSL esterase/lipase 6 (GLIP6) from Arabidopsis thaliana (Mouse-ear cress).